Consider the following 344-residue polypeptide: Uroporphyrinogen decarboxylase (344 aa).

Residues 23 to 27, D73, Y149, T204, and H321 each bind substrate; that span reads RQAGR.

Belongs to the uroporphyrinogen decarboxylase family. In terms of assembly, homodimer.

Its subcellular location is the cytoplasm. It carries out the reaction uroporphyrinogen III + 4 H(+) = coproporphyrinogen III + 4 CO2. Its pathway is porphyrin-containing compound metabolism; protoporphyrin-IX biosynthesis; coproporphyrinogen-III from 5-aminolevulinate: step 4/4. Functionally, catalyzes the decarboxylation of four acetate groups of uroporphyrinogen-III to yield coproporphyrinogen-III. The chain is Uroporphyrinogen decarboxylase from Francisella philomiragia subsp. philomiragia (strain ATCC 25017 / CCUG 19701 / FSC 153 / O#319-036).